Consider the following 623-residue polypeptide: C2H2-type transcription factor zfpA (623 aa).

Residues 202–219 (GLAVSSPMPNSGPHSRSV) show a composition bias toward polar residues. 2 disordered regions span residues 202–256 (GLAV…EKGR) and 468–493 (SNKA…NGKA). Positions 227–239 (SISSTNSRRSQLS) are enriched in low complexity. The segment at 255–276 (GRCPHPDCGRVFKDLKAHMLTH) adopts a C2H2-type zinc-finger fold.

Its subcellular location is the nucleus. Its function is as follows. Transcription factor involved in fungal growth and virulence potential. Negatively regulates antifungal drug susceptibility via transcriptional inhibition of the expressions of drug efflux pumps in a crzA-dependent way. Under the treatment of azoles, both zfpA and crzA transfer to nuclei and coregulate the expression of multidrug transporters and then keep normal drug susceptibility in fungal cells. The sequence is that of C2H2-type transcription factor zfpA from Aspergillus fumigatus (strain CBS 144.89 / FGSC A1163 / CEA10) (Neosartorya fumigata).